Reading from the N-terminus, the 191-residue chain is Putative 3-methyladenine DNA glycosylase (191 aa).

Belongs to the DNA glycosylase MPG family.

This is Putative 3-methyladenine DNA glycosylase from Cutibacterium acnes (strain DSM 16379 / KPA171202) (Propionibacterium acnes).